The following is a 156-amino-acid chain: SsrA-binding protein (156 aa).

It belongs to the SmpB family.

The protein localises to the cytoplasm. Its function is as follows. Required for rescue of stalled ribosomes mediated by trans-translation. Binds to transfer-messenger RNA (tmRNA), required for stable association of tmRNA with ribosomes. tmRNA and SmpB together mimic tRNA shape, replacing the anticodon stem-loop with SmpB. tmRNA is encoded by the ssrA gene; the 2 termini fold to resemble tRNA(Ala) and it encodes a 'tag peptide', a short internal open reading frame. During trans-translation Ala-aminoacylated tmRNA acts like a tRNA, entering the A-site of stalled ribosomes, displacing the stalled mRNA. The ribosome then switches to translate the ORF on the tmRNA; the nascent peptide is terminated with the 'tag peptide' encoded by the tmRNA and targeted for degradation. The ribosome is freed to recommence translation, which seems to be the essential function of trans-translation. In Staphylococcus epidermidis (strain ATCC 35984 / DSM 28319 / BCRC 17069 / CCUG 31568 / BM 3577 / RP62A), this protein is SsrA-binding protein.